Here is a 536-residue protein sequence, read N- to C-terminus: 1,4-beta-D-glucan cellobiohydrolase B (536 aa).

The signal sequence occupies residues 1 to 21 (MSSFQIYRAALLLSILATANA). Residues 22 to 458 (QQVGTYTTET…SNIKFGPIGS (437 aa)) form a catalytic region. The active-site Nucleophile is the Glu-233. The active-site Proton donor is Glu-238. Asn-351 and Asn-414 each carry an N-linked (GlcNAc...) asparagine glycan. The interval 459 to 500 (TYSSGSSSGSGSSSSSSSTTTKATSTTLKTTSTTSSGSSSTS) is ser/Thr-rich linker. The interval 464–499 (SSSGSGSSSSSSSTTTKATSTTLKTTSTTSSGSSST) is disordered. One can recognise a CBM1 domain in the interval 500 to 536 (SAAQAYGQCGGQGWTGPTTCVSGYTCTYENAYYSQCL). 2 cysteine pairs are disulfide-bonded: Cys-508-Cys-525 and Cys-519-Cys-535.

This sequence belongs to the glycosyl hydrolase 7 (cellulase C) family.

The protein localises to the secreted. The enzyme catalyses Hydrolysis of (1-&gt;4)-beta-D-glucosidic linkages in cellulose and cellotetraose, releasing cellobiose from the non-reducing ends of the chains.. Its function is as follows. The biological conversion of cellulose to glucose generally requires three types of hydrolytic enzymes: (1) Endoglucanases which cut internal beta-1,4-glucosidic bonds; (2) Exocellobiohydrolases that cut the disaccharide cellobiose from the non-reducing end of the cellulose polymer chain; (3) Beta-1,4-glucosidases which hydrolyze the cellobiose and other short cello-oligosaccharides to glucose. This chain is 1,4-beta-D-glucan cellobiohydrolase B (cbhB), found in Aspergillus niger.